Here is a 160-residue protein sequence, read N- to C-terminus: Protein max (160 aa).

The segment covering 1–13 has biased composition (acidic residues); that stretch reads MSDNDDIEVESDE. Residues 1–40 are disordered; that stretch reads MSDNDDIEVESDEEQPRFQSAADKRAHHNALERKRRDHIK. Ser2 is modified (N-acetylserine). A phosphoserine mark is found at Ser2 and Ser11. The 52-residue stretch at 23–74 folds into the bHLH domain; sequence DKRAHHNALERKRRDHIKDSFHSLRDSVPSLQGEKASRAQILDKATEYIQYM. The segment covering 29–40 has biased composition (basic and acidic residues); it reads NALERKRRDHIK. N6-acetyllysine is present on Lys66. Positions 81–102 are leucine-zipper; the sequence is HQQDIDDLKRQNALLEQQVRAL. The disordered stretch occupies residues 105–160; the sequence is ARSSAQLQTNYPSSDNSLYTNAKGGTISAFDGGSDSSSESEPEEPQNRKKLRMEAS. Residue Ser107 is modified to Phosphoserine. Residues 107–124 show a composition bias toward polar residues; that stretch reads SSAQLQTNYPSSDNSLYT. Lys153 and Lys154 each carry N6-acetyllysine.

It belongs to the MAX family. As to quaternary structure, efficient DNA binding requires dimerization with another bHLH protein. Binds DNA as a heterodimer with MYC or MAD. Part of the E2F6.com-1 complex in G0 phase composed of E2F6, MGA, MAX, TFDP1, CBX3, BAT8, EUHMTASE1, RING1, RNF2, MBLR, L3MBTL2 and YAF2. Component of some MLL1/MLL complex, at least composed of the core components KMT2A/MLL1, ASH2L, HCFC1/HCF1, WDR5 and RBBP5, as well as the facultative components BACC1, CHD8, E2F6, HSP70, INO80C, KANSL1, LAS1L, MAX, MCRS1, MGA, MYST1/MOF, PELP1, PHF20, PRP31, RING2, RUVB1/TIP49A, RUVB2/TIP49B, SENP3, TAF1, TAF4, TAF6, TAF7, TAF9 and TEX10. Interacts with SPAG9. The heterodimer MYC:MAX interacts with ABI1; the interaction may enhance MYC:MAX transcriptional activity. Post-translationally, phosphorylated.

It localises to the nucleus. The protein localises to the cell projection. It is found in the dendrite. Transcription regulator. Forms a sequence-specific DNA-binding protein complex with MYC or MAD which recognizes the core sequence 5'-CAC[GA]TG-3'. The MYC:MAX complex is a transcriptional activator, whereas the MAD:MAX complex is a repressor. May repress transcription via the recruitment of a chromatin remodeling complex containing H3 'Lys-9' histone methyltransferase activity. Represses MYC transcriptional activity from E-box elements. This is Protein max from Rattus norvegicus (Rat).